We begin with the raw amino-acid sequence, 145 residues long: Peptide methionine sulfoxide reductase MsrB (145 aa).

Residues lysine 6–valine 129 enclose the MsrB domain. Catalysis depends on cysteine 118, which acts as the Nucleophile.

Belongs to the MsrB Met sulfoxide reductase family.

The enzyme catalyses L-methionyl-[protein] + [thioredoxin]-disulfide + H2O = L-methionyl-(R)-S-oxide-[protein] + [thioredoxin]-dithiol. The sequence is that of Peptide methionine sulfoxide reductase MsrB from Listeria monocytogenes serotype 4b (strain CLIP80459).